We begin with the raw amino-acid sequence, 380 residues long: uncharacterized protein (380 aa).

2 consecutive HTH tetR-type domains span residues 3–63 (ESAE…KEGL) and 201–262 (VRTR…CAEI). The H-T-H motif DNA-binding region spans 225-244 (TISDITRKSNIRRATFYDHY).

This is an uncharacterized protein from Bacillus subtilis (strain 168).